A 494-amino-acid chain; its full sequence is Solute carrier family 2, facilitated glucose transporter member 3 (494 aa).

The Cytoplasmic segment spans residues 1–10 (MGTTKVTAPL). Residues 11–32 (IFAISVATIGSFQFGYNTGVIN) traverse the membrane as a helical segment. Topologically, residues 33-64 (APEAIIKDFLNYTLEERSEPPPSSVLLTSLWS) are extracellular. Asparagine 43 carries N-linked (GlcNAc...) asparagine glycosylation. A helical transmembrane segment spans residues 65–85 (LSVAIFSVGGMIGSFSVGLFV). The Cytoplasmic portion of the chain corresponds to 86–90 (NRFGR). A helical transmembrane segment spans residues 91–111 (GNSMLIVNLLAIAGGCLMGFC). Over 112-118 (KIAESVE) the chain is Extracellular. The helical transmembrane segment at 119-142 (MLILGRLIIGLFCGLCTGFVPMYI) threads the bilayer. Residues 143–153 (GEISPTALRGA) are Cytoplasmic-facing. The chain crosses the membrane as a helical span at residues 154–174 (FGTLNQLGIVIGILVAQIFGL). Residue glutamine 159 coordinates D-glucose. The Extracellular portion of the chain corresponds to 175 to 183 (KVILGTEDL). Residues 184 to 204 (WPLLLGFTILPAIIQCAALPF) traverse the membrane as a helical segment. At 205–269 (CPESPRFLLI…LFRAPNYRQP (65 aa)) the chain is on the cytoplasmic side. A Phosphothreonine modification is found at threonine 232. The chain crosses the membrane as a helical span at residues 270–290 (IIISIMLQLSQQLSGINAVFY). Positions 277 to 279 (QLS) are important for selectivity against fructose. Residues 280 to 281 (QQ) and asparagine 286 each bind D-glucose. Over 291–304 (YSTGIFKDAGVQEP) the chain is Extracellular. Residues 305 to 325 (VYATIGAGVVNTIFTVVSVFL) traverse the membrane as a helical segment. Asparagine 315 contributes to the D-glucose binding site. Over 326 to 331 (VERAGR) the chain is Cytoplasmic. The chain crosses the membrane as a helical span at residues 332-352 (RTLHLIGLGGMAFCSILMTIS). Residues 353-363 (LLLKDNYSWMS) are Extracellular-facing. An N-linked (GlcNAc...) asparagine glycan is attached at asparagine 358. Residues 364–389 (FICIGAILVFVAFFEIGPGPIPWFIV) form a helical membrane-spanning segment. Glutamate 378 and tryptophan 386 together coordinate D-glucose. Residues 390-399 (AELFGQGPRP) are Cytoplasmic-facing. Residues 400–420 (AAMAVAGCSNWTSNFLVGLLF) traverse the membrane as a helical segment. Residues 421–429 (PSAAFYLGA) are Extracellular-facing. Residues 430–450 (YVFIVFTVFLVIFWVFTFFKV) traverse the membrane as a helical segment. Residues 451–494 (PETRGRTFEEITRAFEGQTQTGTRGEKGPIMEMNSIQPTKDTNA) are Cytoplasmic-facing. The interval 469–494 (TQTGTRGEKGPIMEMNSIQPTKDTNA) is disordered. The segment covering 484 to 494 (NSIQPTKDTNA) has biased composition (polar residues). At serine 485 the chain carries Phosphoserine. Threonine 492 carries the post-translational modification Phosphothreonine.

It belongs to the major facilitator superfamily. Sugar transporter (TC 2.A.1.1) family. Glucose transporter subfamily. As to quaternary structure, interacts with SMIM43; the interaction may promote SLC2A1-mediated glucose transport to meet the energy needs of mesendoderm differentiation.

The protein resides in the cell membrane. It localises to the perikaryon. The protein localises to the cell projection. It carries out the reaction D-glucose(out) = D-glucose(in). The catalysed reaction is D-galactose(in) = D-galactose(out). Its activity is regulated as follows. Deoxyglucose transport is inhibited by D-glucose, D-galactose and maltose. Galactose transport is inhibited by D-glucose and maltose. Its function is as follows. Facilitative glucose transporter. Can also mediate the uptake of various other monosaccharides across the cell membrane. Mediates the uptake of glucose, 2-deoxyglucose, galactose, mannose, xylose and fucose, and probably also dehydroascorbate. Does not mediate fructose transport. Required for mesendoderm differentiation. In Bos taurus (Bovine), this protein is Solute carrier family 2, facilitated glucose transporter member 3.